The chain runs to 406 residues: MAACRGFLLRRINDSCLTFRRHKFKKKWATTLPKIPCSRLALQYFDMNYSMQFGDLWPSIRISLLTEQKYGALVNNFSHKETVLKNLSAFNAKDFISEAQHVISLLQIQNNLDTSEKMTSGEASLNLVGQKNNAEKTQATNLLSSLSNTKLTCFKFSRGDISRFPQSRSDSFGLLEYYLMDAASLLPVLALDVQHGHSVLDLCAAPGGKTLALLQTENCQYLAANDLSTSRSSRLHRVLRSYVPRAQRTEHKVCITSQDGRLWGDAEANTYDRVLVDVPCTTDRHSLLEEENNIFHRIRTKQRQMLPLLQAELLVAGLRAVRPGGEVVYSTCSLSQLQNECVVERAVELAASDHGVHVKPQDLSCFREVFKNTFNFFQGCRVGELVLPHLTANFGPMFFCKLLRIE.

S-adenosyl-L-methionine contacts are provided by glycine 207, glycine 208, lysine 209, aspartate 226, arginine 231, aspartate 259, glycine 260, and aspartate 277. Cysteine 332 functions as the Nucleophile in the catalytic mechanism.

The protein belongs to the class I-like SAM-binding methyltransferase superfamily. RsmB/NOP family.

It is found in the mitochondrion. It catalyses the reaction a cytidine in rRNA + S-adenosyl-L-methionine = a 5-methylcytidine in rRNA + S-adenosyl-L-homocysteine + H(+). The catalysed reaction is a cytidine in mRNA + S-adenosyl-L-methionine = a 5-methylcytidine in mRNA + S-adenosyl-L-homocysteine + H(+). Involved in mitochondrial ribosome large subunit biogenesis. Functionally, mitochondrial RNA cytosine C(5)-methyltransferase that methylates cytosine to 5-methylcytosine (m5C) in various RNAs, such as rRNAs, mRNAs and some long non-coding RNAs (lncRNAs). Involved in mitochondrial ribosome small subunit (SSU) maturation by catalyzing methylation of mitochondrial 12S rRNA. The polypeptide is 5-cytosine rRNA methyltransferase NSUN4 (nsun4) (Xenopus tropicalis (Western clawed frog)).